The following is a 1431-amino-acid chain: Protein CFT1 (1431 aa).

Positions 721-759 (EPSKSESSEPISHQIDSENKPNITNGINGTTARSARQTQ) are disordered. A compositionally biased stretch (polar residues) spans 740 to 759 (KPNITNGINGTTARSARQTQ).

It belongs to the CFT1 family.

The protein resides in the nucleus. Its function is as follows. RNA-binding component of the cleavage and polyadenylation factor (CPF) complex, which plays a key role in polyadenylation-dependent pre-mRNA 3'-end formation and cooperates with cleavage factors including the CFIA complex and NAB4/CFIB. Involved in poly(A) site recognition. May be involved in coupling transcription termination and mRNA 3'-end formation. In Cryptococcus neoformans var. neoformans serotype D (strain B-3501A) (Filobasidiella neoformans), this protein is Protein CFT1 (CFT1).